Here is a 150-residue protein sequence, read N- to C-terminus: UPF0208 membrane protein VV1_2222 (150 aa).

2 helical membrane passes run 42–62 (FGIK…MAFN) and 70–90 (AIVM…WLGH).

The protein belongs to the UPF0208 family.

It is found in the cell inner membrane. This is UPF0208 membrane protein VV1_2222 from Vibrio vulnificus (strain CMCP6).